Here is a 67-residue protein sequence, read N- to C-terminus: Large ribosomal subunit protein uL29 (67 aa).

It belongs to the universal ribosomal protein uL29 family.

The protein is Large ribosomal subunit protein uL29 of Acetivibrio thermocellus (strain ATCC 27405 / DSM 1237 / JCM 9322 / NBRC 103400 / NCIMB 10682 / NRRL B-4536 / VPI 7372) (Clostridium thermocellum).